Consider the following 307-residue polypeptide: Urease accessory protein UreD (307 aa).

The protein belongs to the UreD family. As to quaternary structure, ureD, UreF and UreG form a complex that acts as a GTP-hydrolysis-dependent molecular chaperone, activating the urease apoprotein by helping to assemble the nickel containing metallocenter of UreC. The UreE protein probably delivers the nickel.

It is found in the cytoplasm. Its function is as follows. Required for maturation of urease via the functional incorporation of the urease nickel metallocenter. The sequence is that of Urease accessory protein UreD from Prochlorococcus marinus (strain NATL2A).